The chain runs to 395 residues: NAD(P)H-quinone oxidoreductase subunit H (395 aa).

This sequence belongs to the complex I 49 kDa subunit family. As to quaternary structure, NDH-1 can be composed of about 15 different subunits; different subcomplexes with different compositions have been identified which probably have different functions.

Its subcellular location is the cellular thylakoid membrane. The enzyme catalyses a plastoquinone + NADH + (n+1) H(+)(in) = a plastoquinol + NAD(+) + n H(+)(out). The catalysed reaction is a plastoquinone + NADPH + (n+1) H(+)(in) = a plastoquinol + NADP(+) + n H(+)(out). Functionally, NDH-1 shuttles electrons from an unknown electron donor, via FMN and iron-sulfur (Fe-S) centers, to quinones in the respiratory and/or the photosynthetic chain. The immediate electron acceptor for the enzyme in this species is believed to be plastoquinone. Couples the redox reaction to proton translocation, and thus conserves the redox energy in a proton gradient. Cyanobacterial NDH-1 also plays a role in inorganic carbon-concentration. The protein is NAD(P)H-quinone oxidoreductase subunit H of Prochlorococcus marinus subsp. pastoris (strain CCMP1986 / NIES-2087 / MED4).